Consider the following 459-residue polypeptide: Mitochondrial distribution and morphology protein 34 (459 aa).

An SMP-LTD domain is found at Met-1–Gln-190. Residues Arg-338–Lys-347 show a composition bias toward basic and acidic residues. Residues Arg-338–Ser-375 are disordered. The segment covering Pro-348–Arg-359 has biased composition (basic residues).

This sequence belongs to the MDM34 family. In terms of assembly, component of the ER-mitochondria encounter structure (ERMES) or MDM complex, composed of MMM1, MDM10, MDM12 and MDM34. In terms of processing, ubiquitinated by a SCF (SKP1-CUL1-F-box protein) E3 ubiquitin-protein ligase complex containing the F-box protein MDM30. Ubiquitination is important for mitochondrial integrity.

It is found in the mitochondrion outer membrane. In terms of biological role, component of the ERMES/MDM complex, which serves as a molecular tether to connect the endoplasmic reticulum (ER) and mitochondria. Components of this complex are involved in the control of mitochondrial shape and protein biogenesis, and function in nonvesicular lipid trafficking between the ER and mitochondria. MDM34 is required for the interaction of the ER-resident membrane protein MMM1 and the outer mitochondrial membrane-resident beta-barrel protein MDM10. This is Mitochondrial distribution and morphology protein 34 from Saccharomyces cerevisiae (strain YJM789) (Baker's yeast).